We begin with the raw amino-acid sequence, 411 residues long: Multidrug resistance protein MdtH (411 aa).

The next 11 membrane-spanning stretches (helical) occupy residues 13–33 (YFLL…FPLI), 45–65 (ALLV…LGIF), 73–95 (LGAK…FMGI), 99–116 (PWLL…GTLF), 139–159 (LLMI…SWLL), 165–185 (LVCL…AWLL), 213–233 (YVFT…ILPI), 243–263 (AAVR…LYPI), 288–308 (IIPI…GIFY), 340–360 (LGLA…YDMG), and 365–385 (IPQL…LGFY).

This sequence belongs to the major facilitator superfamily. DHA1 family. MdtH (TC 2.A.1.2.21) subfamily.

It is found in the cell membrane. This Baumannia cicadellinicola subsp. Homalodisca coagulata protein is Multidrug resistance protein MdtH.